Reading from the N-terminus, the 228-residue chain is Endolytic peptidoglycan transglycosylase RlpA (228 aa).

An N-terminal signal peptide occupies residues 1–23 (MIQRHKLIVLIFLLIFCLSGCNT).

The protein belongs to the RlpA family.

Its function is as follows. Lytic transglycosylase with a strong preference for naked glycan strands that lack stem peptides. This Rickettsia felis (strain ATCC VR-1525 / URRWXCal2) (Rickettsia azadi) protein is Endolytic peptidoglycan transglycosylase RlpA.